Reading from the N-terminus, the 308-residue chain is Cis-prenyltransferase 4, chloroplastic (308 aa).

The N-terminal 45 residues, 1 to 45 (MAFSLQLQQIFVSYTRFCSQPKSITNPLISLKLPSIHPLAFAQNA), are a transit peptide targeting the chloroplast. The active site involves aspartate 84.

Belongs to the UPP synthase family. Mg(2+) serves as cofactor. Widely expressed.

The protein localises to the plastid. Its subcellular location is the chloroplast. In terms of biological role, uses neryl diphosphate and geranyl diphosphate to catalyze the cis-prenyl chain elongation and produce polyprenyl diphosphate with a chain of 55 carbons. In Solanum lycopersicum (Tomato), this protein is Cis-prenyltransferase 4, chloroplastic.